A 289-amino-acid polypeptide reads, in one-letter code: Protease HtpX (289 aa).

Helical transmembrane passes span isoleucine 4–isoleucine 24 and leucine 36–methionine 56. Histidine 143 contributes to the Zn(2+) binding site. The active site involves glutamate 144. Histidine 147 serves as a coordination point for Zn(2+). 2 consecutive transmembrane segments (helical) span residues leucine 158–valine 178 and methionine 192–leucine 212. Residue glutamate 221 participates in Zn(2+) binding.

It belongs to the peptidase M48B family. It depends on Zn(2+) as a cofactor.

The protein resides in the cell inner membrane. This Vibrio campbellii (strain ATCC BAA-1116) protein is Protease HtpX.